The sequence spans 2169 residues: Voltage-dependent L-type calcium channel subunit alpha-1C (2169 aa).

The Cytoplasmic segment spans residues 1–154 (MIRAFAQPST…RACISIVEWK (154 aa)). The calmodulin-binding stretch occupies residues 77–98 (GAALSWLAAIDAARQAKLMGSA). Residues 104-128 (STVSSTQRKRQQYGKPKKQGGTTAT) form a disordered region. A compositionally biased stretch (basic residues) spans 110 to 121 (QRKRQQYGKPKK). The I repeat unit spans residues 141-438 (NPIRRACISI…LVLGVLSGEF (298 aa)). The chain crosses the membrane as a helical span at residues 155 to 173 (PFEIIILLTIFANCVALAI). The Extracellular portion of the chain corresponds to 174 to 188 (YIPFPEDDSNATNSN). Asparagine 183 carries an N-linked (GlcNAc...) asparagine glycan. A helical membrane pass occupies residues 189-209 (LERVEYLFLIIFTVEAFLKVI). The Cytoplasmic portion of the chain corresponds to 210-218 (AYGLLFHPN). The helical transmembrane segment at 219–239 (AYLRNGWNLLDFIIVVVGLFS) threads the bilayer. Topologically, residues 240 to 262 (AILEQATKADGANALGGKGAGFD) are extracellular. The chain crosses the membrane as a helical span at residues 263–281 (VKALRAFRVLRPLRLVSGV). Over 282–298 (PSLQVVLNSIIKAMVPL) the chain is Cytoplasmic. A helical membrane pass occupies residues 299–320 (LHIALLVLFVIIIYAIIGLELF). Residues 321–380 (MGKMHKTCYNQEGIIDVPAEEDPSPCALETGHGRQCQNGTVCKPGWDGPKHGITNFDNFA) lie on the Extracellular side of the membrane. Cystine bridges form between cysteine 328-cysteine 356 and cysteine 346-cysteine 362. N-linked (GlcNAc...) asparagine glycosylation occurs at asparagine 358. Positions 381–402 (FAMLTVFQCITMEGWTDVLYWM) form an intramembrane region, pore-forming. The short motif at 391–394 (TMEG) is the Selectivity filter of repeat I element. Glutamate 393 is a binding site for Ca(2+). Over 403-410 (QDAMGYEL) the chain is Extracellular. A helical membrane pass occupies residues 411–431 (PWVYFVSLVIFGSFFVLNLVL). Residues 432–554 (GVLSGEFSKE…RKCRAAVKSN (123 aa)) are Cytoplasmic-facing. The interval 458-475 (QQLEEDLKGYLDWITQAE) is AID/alpha-interaction domain; mediates interaction with the beta subunit. The segment at 479–511 (PENEDEGMDEDKPRNMSMPTSETESVNTENVAG) is disordered. A compositionally biased stretch (polar residues) spans 495-508 (SMPTSETESVNTEN). Serine 499 is modified (phosphoserine). Threonine 506 bears the Phosphothreonine mark. One copy of the II repeat lies at 540-786 (NRFCRRKCRA…LFLAIAVDNL (247 aa)). The chain crosses the membrane as a helical span at residues 555–573 (VFYWLVIFLVFLNTLTIAS). At 574–584 (EHYNQPHWLTE) the chain is on the extracellular side. The chain crosses the membrane as a helical span at residues 585–605 (VQDTANKALLALFTAEMLLKM). The Cytoplasmic segment spans residues 606-616 (YSLGLQAYFVS). A helical transmembrane segment spans residues 617-636 (LFNRFDCFIVCGGILETILV). The Extracellular portion of the chain corresponds to 637-645 (ETKIMSPLG). Residues 646-664 (ISCWRCVRLLRIFKITRYW) traverse the membrane as a helical segment. The Cytoplasmic portion of the chain corresponds to 665–683 (NSLSNLVASLLNSLRSIAS). Residues 684-703 (LLLLLFLFIIIFSLLGMQLF) form a helical membrane-spanning segment. At 704 to 723 (GGKFNFDEMQTRRSTFDNFP) the chain is on the extracellular side. Residues 724 to 745 (QSLLTVFQILTGEDWNSVMYDG) constitute an intramembrane region (pore-forming). A Selectivity filter of repeat II motif is present at residues 734 to 737 (TGED). Glutamate 736 is a Ca(2+) binding site. At 746-755 (IMAYGGPSFP) the chain is on the extracellular side. Residues 756–775 (GMLVCIYFIILFISPNYILL) traverse the membrane as a helical segment. Topologically, residues 776–930 (NLFLAIAVDN…LQCHRIVNDT (155 aa)) are cytoplasmic. Residues 794–891 (SAQKEEEEEK…EMPVGPRPRP (98 aa)) are disordered. Residues 813–836 (SPEKKQEVMEKPAVEESKEEKIEL) show a composition bias toward basic and acidic residues. Residues serine 838 and serine 845 each carry the phosphoserine modification. Residues 859–906 (SENEDKSPHSNPDTAGEEDEEEPEMPVGPRPRPLSELHLKEKAVPMPE) form an interaction with STAC2 region. Acidic residues predominate over residues 873–882 (AGEEDEEEPE). One copy of the III repeat lies at 917–1198 (NRFRLQCHRI…IFVGFVIVTF (282 aa)). The chain crosses the membrane as a helical span at residues 931–949 (IFTNLILFFILLSSISLAA). The Extracellular segment spans residues 950-961 (EDPVQHTSFRNH). Residues 962 to 981 (ILFYFDIVFTTIFTIEIALK) traverse the membrane as a helical segment. The Cytoplasmic segment spans residues 982 to 997 (MTAYGAFLHKGSFCRN). The helical transmembrane segment at 998 to 1016 (YFNILDLLVVSVSLISFGI) threads the bilayer. At 1017 to 1023 (QSSAINV) the chain is on the extracellular side. Residues 1024 to 1041 (VKILRVLRVLRPLRINRA) traverse the membrane as a helical segment. The Cytoplasmic segment spans residues 1042-1060 (KGLKHVVQCVFVAIRTIGN). A helical membrane pass occupies residues 1061-1080 (IVIVTTLLQFMFACIGVQLF). At 1081-1130 (KGKLYTCSDSSKQTEAESKGNYITYKTGEVDHPIIQPRSWENSKFDFDNV) the chain is on the extracellular side. Residues 1118–1207 (RSWENSKFDF…FQEQGEQEYK (90 aa)) are dihydropyridine binding. The segment at residues 1131-1151 (LAAMMALFTVSTFEGWPELLY) is an intramembrane region (pore-forming). Residues 1142 to 1145 (TFEG) carry the Selectivity filter of repeat III motif. Position 1144 (glutamate 1144) interacts with Ca(2+). The Extracellular segment spans residues 1152–1168 (RSIDSHTEDKGPIYNYR). A helical membrane pass occupies residues 1169–1190 (VEISIFFIIYIIIIAFFMMNIF). Topologically, residues 1191–1248 (VGFVIVTFQEQGEQEYKNCELDKNQRQCVEYALKARPLPRYIPKNQHQYKVWYVVNST) are cytoplasmic. Residues 1235 to 1508 (NQHQYKVWYV…LFVAVIMDNF (274 aa)) form an IV repeat. The helical transmembrane segment at 1249-1270 (YFEYLMFVLILLNTICLAMQHY) threads the bilayer. Residues 1271–1278 (GQSCLFKI) are Extracellular-facing. Residues 1279–1300 (AMNILNMLFTGLFTVEMILKLI) form a helical membrane-spanning segment. Residues 1301–1310 (AFKPKHYFCD) lie on the Cytoplasmic side of the membrane. A helical membrane pass occupies residues 1311 to 1330 (AWNTFDALIVVGSIVDIAIT). Topologically, residues 1331–1353 (EVHPAEHTQCSPSMSAEENSRIS) are extracellular. Residues 1354–1372 (ITFFRLFRVMRLVKLLSRG) traverse the membrane as a helical segment. Topologically, residues 1373–1390 (EGIRTLLWTFIKSFQALP) are cytoplasmic. A helical transmembrane segment spans residues 1391–1411 (YVALLIVMLFFIYAVIGMQVF). The Extracellular segment spans residues 1412-1433 (GKIALNDTTEINRNNNFQTFPQ). N-linked (GlcNAc...) asparagine glycosylation is present at asparagine 1417. Residues 1434–1452 (AVLLLFRCATGEAWQDIML) constitute an intramembrane region (pore-forming). The Selectivity filter of repeat IV signature appears at 1443-1446 (TGEA). Over 1453–1480 (ACMPGKKCAPESEPSNSTEGETPCGSSF) the chain is Extracellular. The segment at 1459-1527 (KCAPESEPSN…LGPHHLDEFK (69 aa)) is dihydropyridine binding. A disulfide bond links cysteine 1460 and cysteine 1476. N-linked (GlcNAc...) asparagine glycosylation occurs at asparagine 1468. A phenylalkylamine binding region spans residues 1473–1515 (ETPCGSSFAVFYFISFYMLCAFLIINLFVAVIMDNFDYLTRDW). The chain crosses the membrane as a helical span at residues 1481 to 1505 (AVFYFISFYMLCAFLIINLFVAVIM). At 1506-2169 (DNFDYLTRDW…PDSRSYVSNL (664 aa)) the chain is on the cytoplasmic side. The tract at residues 1640–1667 (DEVTVGKFYATFLIQEYFRKFKKRKEQG) is important for interaction with STAC1, STAC2 and STAC3. The interval 1640–1673 (DEVTVGKFYATFLIQEYFRKFKKRKEQGLVGKPS) is calmodulin-binding. The interval 1646–1666 (KFYATFLIQEYFRKFKKRKEQ) is calmodulin-binding IQ region. Positions 1680 to 1699 (LQAGLRTLHDIGPEIRRAIS) are important for localization in at the junctional membrane. 2 positions are modified to phosphoserine: serine 1699 and serine 1720. Composition is skewed to polar residues over residues 1761 to 1770 (KTGNNQADTE) and 1780 to 1792 (STFTPSSYSSTGS). The tract at residues 1761 to 1793 (KTGNNQADTESPSHEKLVDSTFTPSSYSSTGSN) is disordered. Residue serine 1927 is modified to Phosphoserine; by PKA. The segment at 1970 to 1998 (RSHSPSTFPRPRPTPPVTPGSRGRPLQPI) is disordered. The segment covering 1977–1987 (FPRPRPTPPVT) has biased composition (pro residues).

This sequence belongs to the calcium channel alpha-1 subunit (TC 1.A.1.11) family. CACNA1C subfamily. In terms of assembly, component of a calcium channel complex consisting of a pore-forming alpha subunit (CACNA1C) and ancillary beta, gamma and delta subunits. The channel complex contains alpha, beta, gamma and delta subunits in a 1:1:1:1 ratio, i.e. it contains only one of each type of subunit. CACNA1C channel activity is modulated by ancillary subunits, such as CACNB1, CACNB2, CACNB3, CACNA2D1 and CACNA2D4. Interacts with the gamma subunits CACNG4, CACNG6, CACNG7 and CACNG8. Interacts with CACNB1. Interacts with CACNB2. Identified in a complex with CACNA2D4 and CACNB3. Interacts with CACNB3. Interacts with CACNA2D1. Interacts with CACNA2D4. Interacts with CALM1. Interacts (via the N-terminus and the C-terminal C and IQ motifs) with CABP1; this inhibits Ca(2+)-dependent channel inactivation. The binding via the C motif is calcium independent whereas the binding via IQ requires the presence of calcium and is mutually exclusive with calmodulin binding. The binding to the cytoplasmic N-terminal domain is calcium independent but is essential for the channel modulation. Interacts (via C-terminal CDB motif) with CABP5; in a calcium-dependent manner. Interacts with CIB1; the interaction increases upon cardiomyocytes hypertrophy. Interacts with STAC2 and STAC3; this inhibits channel inactivation. In terms of processing, phosphorylation by PKA at Ser-1927 activates the channel. Elevated levels of blood glucose lead to increased phosphorylation by PKA. Is also phosphorylated in vitro by CaM-kinase II, PKC and CGPK. In terms of tissue distribution, detected in hippocampus and brain cortex, on neuronal cell bodies and dendrites, and in post-synaptic density in brain (at protein level). Isoforms 4 and 5 are expressed throughout the central nervous system, with highest levels in the olfactory bulb and cerebellum. Also expressed in heart, pituitary, adrenal gland, liver, kidney, and in a much lesser extent in testes and spleen.

The protein resides in the cell membrane. Its subcellular location is the sarcolemma. It is found in the perikaryon. It localises to the postsynaptic density membrane. The protein localises to the cell projection. The protein resides in the dendrite. Its subcellular location is the T-tubule. It carries out the reaction Ca(2+)(in) = Ca(2+)(out). Its activity is regulated as follows. Inhibited by dihydropyridines (DHP), such as isradipine. Inhibited by nifedipine. Channel activity is regulated by Ca(2+) and calmodulin. Binding of STAC1, STAC2 or STAC3 to a region that overlaps with the calmodulin binding site inhibits channel inactivation by Ca(2+) and calmodulin. Binding of calmodulin or CABP1 at the same regulatory sites results in opposite effects on the channel function. Shear stress and pressure increases calcium channel activity. Its function is as follows. Pore-forming, alpha-1C subunit of the voltage-gated calcium channel that gives rise to L-type calcium currents. Mediates influx of calcium ions into the cytoplasm, and thereby triggers calcium release from the sarcoplasm. Plays an important role in excitation-contraction coupling in the heart. Required for normal heart development and normal regulation of heart rhythm. Required for normal contraction of smooth muscle cells in blood vessels and in the intestine. Essential for normal blood pressure regulation via its role in the contraction of arterial smooth muscle cells. Long-lasting (L-type) calcium channels belong to the 'high-voltage activated' (HVA) group. In Rattus norvegicus (Rat), this protein is Voltage-dependent L-type calcium channel subunit alpha-1C (Cacna1c).